The chain runs to 85 residues: Toxin BmKa1 (85 aa).

The first 19 residues, M1–S19, serve as a signal peptide directing secretion. Residues R21–N83 enclose the LCN-type CS-alpha/beta domain. 4 cysteine pairs are disulfide-bonded: C31-C82, C35-C55, C41-C65, and C45-C67.

Belongs to the long (4 C-C) scorpion toxin superfamily. Sodium channel inhibitor family. Alpha subfamily. In terms of tissue distribution, expressed by the venom gland.

The protein localises to the secreted. Alpha toxins bind voltage-independently at site-3 of sodium channels (Nav) and inhibit the inactivation of the activated channels, thereby blocking neuronal transmission. In Olivierus martensii (Manchurian scorpion), this protein is Toxin BmKa1.